Reading from the N-terminus, the 545-residue chain is CTP synthase (545 aa).

The tract at residues 1–266 is amidoligase domain; that stretch reads MTTNYIFVTG…DDYICKRFSL (266 aa). S14 contacts CTP. S14 is a binding site for UTP. ATP is bound by residues 15-20 and D72; that span reads SLGKGI. D72 and E140 together coordinate Mg(2+). Residues 147–149, 187–192, and K223 each bind CTP; these read DIE and KTKPTQ. Residues 187-192 and K223 contribute to the UTP site; that span reads KTKPTQ. Residue 239–241 participates in ATP binding; the sequence is KDV. A Glutamine amidotransferase type-1 domain is found at 291-542; that stretch reads TIGMVGKYIE…VKAASEYQKR (252 aa). Residue G352 participates in L-glutamine binding. Catalysis depends on C379, which acts as the Nucleophile; for glutamine hydrolysis. Residues 380–383, E403, and R470 contribute to the L-glutamine site; that span reads LGMQ. Residues H515 and E517 contribute to the active site.

The protein belongs to the CTP synthase family. In terms of assembly, homotetramer.

It catalyses the reaction UTP + L-glutamine + ATP + H2O = CTP + L-glutamate + ADP + phosphate + 2 H(+). The catalysed reaction is L-glutamine + H2O = L-glutamate + NH4(+). The enzyme catalyses UTP + NH4(+) + ATP = CTP + ADP + phosphate + 2 H(+). The protein operates within pyrimidine metabolism; CTP biosynthesis via de novo pathway; CTP from UDP: step 2/2. With respect to regulation, allosterically activated by GTP, when glutamine is the substrate; GTP has no effect on the reaction when ammonia is the substrate. The allosteric effector GTP functions by stabilizing the protein conformation that binds the tetrahedral intermediate(s) formed during glutamine hydrolysis. Inhibited by the product CTP, via allosteric rather than competitive inhibition. Functionally, catalyzes the ATP-dependent amination of UTP to CTP with either L-glutamine or ammonia as the source of nitrogen. Regulates intracellular CTP levels through interactions with the four ribonucleotide triphosphates. The polypeptide is CTP synthase (Klebsiella pneumoniae (strain 342)).